The primary structure comprises 204 residues: Leucyl/phenylalanyl-tRNA--protein transferase (204 aa).

This sequence belongs to the L/F-transferase family.

It is found in the cytoplasm. The catalysed reaction is N-terminal L-lysyl-[protein] + L-leucyl-tRNA(Leu) = N-terminal L-leucyl-L-lysyl-[protein] + tRNA(Leu) + H(+). The enzyme catalyses N-terminal L-arginyl-[protein] + L-leucyl-tRNA(Leu) = N-terminal L-leucyl-L-arginyl-[protein] + tRNA(Leu) + H(+). It carries out the reaction L-phenylalanyl-tRNA(Phe) + an N-terminal L-alpha-aminoacyl-[protein] = an N-terminal L-phenylalanyl-L-alpha-aminoacyl-[protein] + tRNA(Phe). Functions in the N-end rule pathway of protein degradation where it conjugates Leu, Phe and, less efficiently, Met from aminoacyl-tRNAs to the N-termini of proteins containing an N-terminal arginine or lysine. This is Leucyl/phenylalanyl-tRNA--protein transferase from Brucella melitensis biotype 2 (strain ATCC 23457).